The sequence spans 689 residues: Elongation factor G (689 aa).

In terms of domain architecture, tr-type G spans 8 to 282 (ERTRNIGIMA…AVVDYLPAPT (275 aa)). GTP-binding positions include 17-24 (AHIDAGKT), 81-85 (DTPGH), and 135-138 (NKMD).

The protein belongs to the TRAFAC class translation factor GTPase superfamily. Classic translation factor GTPase family. EF-G/EF-2 subfamily.

It localises to the cytoplasm. Its function is as follows. Catalyzes the GTP-dependent ribosomal translocation step during translation elongation. During this step, the ribosome changes from the pre-translocational (PRE) to the post-translocational (POST) state as the newly formed A-site-bound peptidyl-tRNA and P-site-bound deacylated tRNA move to the P and E sites, respectively. Catalyzes the coordinated movement of the two tRNA molecules, the mRNA and conformational changes in the ribosome. In Desulforudis audaxviator (strain MP104C), this protein is Elongation factor G.